A 103-amino-acid chain; its full sequence is Large ribosomal subunit protein bL21 (103 aa).

The segment covering 83–92 (YRRKKGHRQP) has biased composition (basic residues). The disordered stretch occupies residues 83-103 (YRRKKGHRQPFSRVTVEKIEA).

The protein belongs to the bacterial ribosomal protein bL21 family. Part of the 50S ribosomal subunit. Contacts protein L20.

Its function is as follows. This protein binds to 23S rRNA in the presence of protein L20. The sequence is that of Large ribosomal subunit protein bL21 from Pelotomaculum thermopropionicum (strain DSM 13744 / JCM 10971 / SI).